The following is a 193-amino-acid chain: Chaperone protein TorD (193 aa).

Belongs to the TorD/DmsD family. TorD subfamily.

It localises to the cytoplasm. Functionally, involved in the biogenesis of TorA. Acts on TorA before the insertion of the molybdenum cofactor and, as a result, probably favors a conformation of the apoenzyme that is competent for acquiring the cofactor. In Histophilus somni (strain 129Pt) (Haemophilus somnus), this protein is Chaperone protein TorD.